Here is a 409-residue protein sequence, read N- to C-terminus: Phospholipase ABHD3 (409 aa).

The helical; Signal-anchor for type II membrane protein transmembrane segment at 26-46 (GFFGSGVGLSLILGFSVAYAF) threads the bilayer. Positions 140 to 233 (PTILLLPGLT…MLLLNYLGKI (94 aa)) constitute an AB hydrolase-1 domain. Catalysis depends on charge relay system residues Ser220, Asp346, and His375.

It belongs to the AB hydrolase superfamily. AB hydrolase 4 family.

Its subcellular location is the membrane. The catalysed reaction is a 1,2-diacyl-sn-glycero-3-phosphocholine + H2O = a 1-acyl-sn-glycero-3-phosphocholine + a fatty acid + H(+). It carries out the reaction a 1,2-diacyl-sn-glycero-3-phosphocholine + H2O = a 2-acyl-sn-glycero-3-phosphocholine + a fatty acid + H(+). The enzyme catalyses 1-tetradecanoyl-2-(9Z,12Z-octadecadienoyl)-sn-glycero-3-phosphocholine + H2O = 2-(9Z,12Z-octadecadienoyl)-sn-glycero-3-phosphocholine + tetradecanoate + H(+). It catalyses the reaction 1-tetradecanoyl-2-(9Z,12Z-octadecadienoyl)-sn-glycero-3-phosphocholine + H2O = 1-tetradecanoyl-sn-glycero-3-phosphocholine + (9Z,12Z)-octadecadienoate + H(+). The catalysed reaction is 1-tetradecanoyl-2-(5Z,8Z,11Z,14Z-eicosatetraenoyl)-sn-glycero-3-phosphocholine + H2O = 2-(5Z,8Z,11Z,14Z)-eicosatetraenoyl-sn-glycero-3-phosphocholine + tetradecanoate + H(+). It carries out the reaction 1-tetradecanoyl-2-(4Z,7Z,10Z,13Z,16Z,19Z-docosahexaenoyl)-sn-glycero-3-phosphocholine + H2O = 2-(4Z,7Z,10Z,13Z,16Z,19Z-docosahexaenoyl)-sn-glycero-3-phosphocholine + tetradecanoate + H(+). The enzyme catalyses 1,2-ditetradecanoyl-sn-glycero-3-phosphocholine + H2O = 2-tetradecanoyl-sn-glycero-3-phosphocholine + tetradecanoate + H(+). It catalyses the reaction 1-octadecanoyl-2-acetyl-sn-glycero-3-phosphocholine + H2O = 1-octadecanoyl-sn-glycero-3-phosphocholine + acetate + H(+). The catalysed reaction is 1,2-ditetradecanoyl-sn-glycero-3-phosphocholine + H2O = 1-tetradecanoyl-sn-glycero-3-phosphocholine + tetradecanoate + H(+). It carries out the reaction 1-octadecanoyl-2-pentanoyl-sn-glycero-3-phosphocholine + H2O = pentanoate + 1-octadecanoyl-sn-glycero-3-phosphocholine + H(+). The enzyme catalyses 1-octadecanoyl-2-hexanoyl-sn-glycero-3-phosphocholine + H2O = hexanoate + 1-octadecanoyl-sn-glycero-3-phosphocholine + H(+). It catalyses the reaction 1-octadecanoyl-2-octanoyl-sn-glycero-3-phosphocholine + H2O = 1-octadecanoyl-sn-glycero-3-phosphocholine + octanoate + H(+). The catalysed reaction is 1-octadecanoyl-2-nonanoyl-sn-glycero-3-phosphocholine + H2O = nonanoate + 1-octadecanoyl-sn-glycero-3-phosphocholine + H(+). It carries out the reaction 1-O-hexadecyl-2-nonadioyl-sn-glycero-3-phosphocholine + H2O = nonanedioate + 1-O-hexadecyl-sn-glycero-3-phosphocholine + H(+). The enzyme catalyses 1-hexadecanoyl-2-nonadioyl-sn-glycero-3-phosphocholine + H2O = nonanedioate + 1-hexadecanoyl-sn-glycero-3-phosphocholine + H(+). It catalyses the reaction 1-hexadecanoyl-2-(9-oxononanoyl)-sn-glycero-3-phosphocholine + H2O = 9-oxononanoate + 1-hexadecanoyl-sn-glycero-3-phosphocholine + H(+). The catalysed reaction is 1-hexadecanoyl-2-(5-oxopentanoyl)-sn-glycero-3-phosphocholine + H2O = 5-oxopentanoate + 1-hexadecanoyl-sn-glycero-3-phosphocholine + H(+). It carries out the reaction 1-hexadecanoyl-2-glutaroyl-sn-glycero-3-phosphocholine + H2O = glutarate + 1-hexadecanoyl-sn-glycero-3-phosphocholine + H(+). The enzyme catalyses 1-O-hexadecyl-2-acetyl-sn-glycero-3-phosphocholine + H2O = 1-O-hexadecyl-sn-glycero-3-phosphocholine + acetate + H(+). Phospholipase that may play a role in phospholipids remodeling. May selectively cleave myristate (C14)-containing phosphatidylcholines through its predominant phospholipase 1 activity, cleaving preferentially acyl groups in sn1 position. In parallel, may have a minor phospholipase 2 activity acting on acyl groups in position sn2. In addition to (C14)-containing phosphatidylcholines, may also act on other medium-chain-containing and oxidatively truncated phospholipids. This chain is Phospholipase ABHD3, found in Homo sapiens (Human).